Consider the following 367-residue polypeptide: MEAEDEYSAGCSFSLMCQEDSTDLDDDGGGGGCFAGDGRADLLLVYNAAAAADDEDEEEVEEYMDHLVSKESSFCSSSSSTSSSSCCFSDAGGESAAAAAPMDWFALARRATVKWILETRGCFGFCHRTAYLAIAYFDRFCLRRCIDRSVMPWAARLLAVACVSLAAKMEEYRAPALSEFRAGVGDDGYEFSCVCIRRMELLVLSTLDWRMAAVTPFDYLPCLSSRLRRHVGGGGGAGASAALIFSAAEAASVLDHRPSTVAAAAVLAATHGALTREALESKMSGLSPSFLLDKEDVFACYSAMLSQPTSPASKSTTTTTGKRSSSSSCSESTDAASSYDATAASFPAAASCGSKRMRLELPGGILR.

The interval 307–333 (QPTSPASKSTTTTTGKRSSSSSCSEST) is disordered.

The protein belongs to the cyclin family. Cyclin D subfamily.

This Oryza sativa subsp. japonica (Rice) protein is Cyclin-D5-1 (CYCD5-1).